The sequence spans 204 residues: Large ribosomal subunit protein eL15 (204 aa).

It belongs to the eukaryotic ribosomal protein eL15 family. As to quaternary structure, component of the large ribosomal subunit.

It is found in the cytoplasm. Functionally, component of the large ribosomal subunit. The ribosome is a large ribonucleoprotein complex responsible for the synthesis of proteins in the cell. The polypeptide is Large ribosomal subunit protein eL15 (rpl15) (Mylopharyngodon piceus (Black carp)).